Reading from the N-terminus, the 22-residue chain is thr operon leader peptide (22 aa).

Residues 1–22 (MRNISLTTTIITTTDTTGNGAG) form a disordered region. Residues 7–22 (TTTIITTTDTTGNGAG) show a composition bias toward low complexity.

This sequence belongs to the thr operon leader peptide family.

In terms of biological role, this protein is involved in control of the biosynthesis of threonine. The chain is thr operon leader peptide from Serratia marcescens.